Here is a 481-residue protein sequence, read N- to C-terminus: Aspartyl/glutamyl-tRNA(Asn/Gln) amidotransferase subunit B (481 aa).

Belongs to the GatB/GatE family. GatB subfamily. In terms of assembly, heterotrimer of A, B and C subunits.

It carries out the reaction L-glutamyl-tRNA(Gln) + L-glutamine + ATP + H2O = L-glutaminyl-tRNA(Gln) + L-glutamate + ADP + phosphate + H(+). The enzyme catalyses L-aspartyl-tRNA(Asn) + L-glutamine + ATP + H2O = L-asparaginyl-tRNA(Asn) + L-glutamate + ADP + phosphate + 2 H(+). Functionally, allows the formation of correctly charged Asn-tRNA(Asn) or Gln-tRNA(Gln) through the transamidation of misacylated Asp-tRNA(Asn) or Glu-tRNA(Gln) in organisms which lack either or both of asparaginyl-tRNA or glutaminyl-tRNA synthetases. The reaction takes place in the presence of glutamine and ATP through an activated phospho-Asp-tRNA(Asn) or phospho-Glu-tRNA(Gln). The protein is Aspartyl/glutamyl-tRNA(Asn/Gln) amidotransferase subunit B of Pseudomonas aeruginosa (strain LESB58).